Here is a 263-residue protein sequence, read N- to C-terminus: HTH-type transcriptional repressor NanR (263 aa).

The disordered stretch occupies residues 1–22 (MGLMNAFDSQTEDSSPAIGRNL). Positions 30-98 (KKLSEMVEEE…NGERARVSRP (69 aa)) constitute an HTH gntR-type domain. Positions 58–77 (ERELMAFFNVGRPSVREALA) form a DNA-binding region, H-T-H motif.

This sequence belongs to the NanR family.

Its function is as follows. Transcriptional repressor that controls expression of the genes required for the catabolism of sialic acids. In Escherichia coli (strain 55989 / EAEC), this protein is HTH-type transcriptional repressor NanR.